A 975-amino-acid chain; its full sequence is 5'-3' exoribonuclease 2 homolog (975 aa).

The segment at 262–279 adopts a CCHC-type zinc-finger fold; the sequence is RACDLCGQYGHELKECRG. Disordered stretches follow at residues 424–443 and 505–532; these read MQMY…GRGQ and SPAD…EGPK. The interval 534–787 is interaction with paxt-1; sequence DIRLYESGWK…GICVLYEDPE (254 aa). Basic and acidic residues predominate over residues 804–821; it reads EPEKTLKPDDWNDRRDGR. The interval 804-975 is disordered; the sequence is EPEKTLKPDD…GGYHGNSSWR (172 aa). Gly residues-rich tracts occupy residues 850-860, 886-895, and 908-932; these read RGGGGGGGGYR, NYGGRDGGGP, and GYQG…GGGS.

It belongs to the 5'-3' exonuclease family. XRN2/RAT1 subfamily. Interacts with paxt-1 (via N-terminus); the interaction is direct and results in stabilization of xrn-2 in the complex. In terms of tissue distribution, expressed in the pharyngeal myoepithelium and intestine. Also expressed in several anterior neurons including the sensory neurons, as well as the interneuron PVT and the pharyngeal motorneuron M5.

The protein localises to the nucleus. Possesses 5'-&gt;3' exoribonuclease activity. Plays a role in maintenance of steady-state concentration and turnover of microRNAs (miRNA) by degradation of mature miRNA. Degradation role is enhanced when in complex with paxt-1. Partially redundant to xrn-1 in miRNA guide strand degradation. Implicated in differential regulation of mRNAs such as let-7 by controlling the accumulation of mature miRNA. Positively regulates molting of the pharyngeal cuticle. The sequence is that of 5'-3' exoribonuclease 2 homolog from Caenorhabditis elegans.